Reading from the N-terminus, the 506-residue chain is Maturase K (506 aa).

Belongs to the intron maturase 2 family. MatK subfamily.

Its subcellular location is the plastid. It localises to the chloroplast. Its function is as follows. Usually encoded in the trnK tRNA gene intron. Probably assists in splicing its own and other chloroplast group II introns. In Prunus persica (Peach), this protein is Maturase K.